A 1201-amino-acid chain; its full sequence is DNA-directed RNA polymerase subunit beta' (1201 aa).

Zn(2+) is bound by residues Cys60, Cys62, Cys75, and Cys78. Residues Asp449, Asp451, and Asp453 each coordinate Mg(2+). Cys818, Cys892, Cys899, and Cys902 together coordinate Zn(2+).

The protein belongs to the RNA polymerase beta' chain family. In terms of assembly, the RNAP catalytic core consists of 2 alpha, 1 beta, 1 beta' and 1 omega subunit. When a sigma factor is associated with the core the holoenzyme is formed, which can initiate transcription. Requires Mg(2+) as cofactor. Zn(2+) serves as cofactor.

The catalysed reaction is RNA(n) + a ribonucleoside 5'-triphosphate = RNA(n+1) + diphosphate. DNA-dependent RNA polymerase catalyzes the transcription of DNA into RNA using the four ribonucleoside triphosphates as substrates. This is DNA-directed RNA polymerase subunit beta' from Listeria monocytogenes serovar 1/2a (strain ATCC BAA-679 / EGD-e).